Reading from the N-terminus, the 117-residue chain is Large ribosomal subunit protein bL19 (117 aa).

The protein belongs to the bacterial ribosomal protein bL19 family.

In terms of biological role, this protein is located at the 30S-50S ribosomal subunit interface and may play a role in the structure and function of the aminoacyl-tRNA binding site. The sequence is that of Large ribosomal subunit protein bL19 from Halorhodospira halophila (strain DSM 244 / SL1) (Ectothiorhodospira halophila (strain DSM 244 / SL1)).